The primary structure comprises 165 residues: Large ribosomal subunit protein uL30 (165 aa).

Belongs to the universal ribosomal protein uL30 family. Part of the 50S ribosomal subunit.

This chain is Large ribosomal subunit protein uL30, found in Thermoplasma acidophilum (strain ATCC 25905 / DSM 1728 / JCM 9062 / NBRC 15155 / AMRC-C165).